A 372-amino-acid chain; its full sequence is DNA replication and repair protein RecF (372 aa).

30 to 37 (GANGQGKT) serves as a coordination point for ATP.

This sequence belongs to the RecF family.

It is found in the cytoplasm. Its function is as follows. The RecF protein is involved in DNA metabolism; it is required for DNA replication and normal SOS inducibility. RecF binds preferentially to single-stranded, linear DNA. It also seems to bind ATP. This is DNA replication and repair protein RecF from Heliobacterium modesticaldum (strain ATCC 51547 / Ice1).